Here is a 376-residue protein sequence, read N- to C-terminus: Chaperone protein DnaJ (376 aa).

Residues 5–70 (DYYEVLGVKK…QKRAAYDQYG (66 aa)) form the J domain. The CR-type zinc-finger motif lies at 131–209 (GVTKEIRIPT…CHGHGRVEKS (79 aa)). The Zn(2+) site is built by Cys144, Cys147, Cys161, Cys164, Cys183, Cys186, Cys197, and Cys200. CXXCXGXG motif repeat units follow at residues 144–151 (CDVCHGSG), 161–168 (CSTCRGAG), 183–190 (CPTCHGSG), and 197–204 (CNKCHGHG).

Belongs to the DnaJ family. Homodimer. Zn(2+) is required as a cofactor.

The protein localises to the cytoplasm. Participates actively in the response to hyperosmotic and heat shock by preventing the aggregation of stress-denatured proteins and by disaggregating proteins, also in an autonomous, DnaK-independent fashion. Unfolded proteins bind initially to DnaJ; upon interaction with the DnaJ-bound protein, DnaK hydrolyzes its bound ATP, resulting in the formation of a stable complex. GrpE releases ADP from DnaK; ATP binding to DnaK triggers the release of the substrate protein, thus completing the reaction cycle. Several rounds of ATP-dependent interactions between DnaJ, DnaK and GrpE are required for fully efficient folding. Also involved, together with DnaK and GrpE, in the DNA replication of plasmids through activation of initiation proteins. In Yersinia enterocolitica serotype O:8 / biotype 1B (strain NCTC 13174 / 8081), this protein is Chaperone protein DnaJ.